The following is a 431-amino-acid chain: MANSC domain-containing protein 1 (431 aa).

Residues 1–26 form the signal peptide; the sequence is MFFGGKGSLTYTLVIICFLTLRLAAS. The Extracellular portion of the chain corresponds to 27-385; that stretch reads QNCLNKSLED…QYGLPFEKWL (359 aa). An N-linked (GlcNAc...) asparagine glycan is attached at Asn-31. The region spanning 33–117 is the MANSC domain; that stretch reads SLEDVVIDIQ…LKPAKGLRSY (85 aa). Asn-222 and Asn-251 each carry an N-linked (GlcNAc...) asparagine glycan. The tract at residues 236–279 is disordered; the sequence is HTTSATPKPAIRLPTNASVTPSGTSQPQLATTSPPVTTVTSQPP. Residues 250 to 265 are compositionally biased toward polar residues; the sequence is TNASVTPSGTSQPQLA. Residues 266–279 show a composition bias toward low complexity; the sequence is TTSPPVTTVTSQPP. Asn-327 and Asn-352 each carry an N-linked (GlcNAc...) asparagine glycan. The tract at residues 352 to 372 is disordered; that stretch reads NKTASWEGREASPGRSSQGNV. The chain crosses the membrane as a helical span at residues 386–408; sequence LIGSLLFGVLFLVIGLVLLGRIL. Residues 409-431 are Cytoplasmic-facing; that stretch reads SESLRRKRYSRLDYLINGIYVDI.

It localises to the membrane. The chain is MANSC domain-containing protein 1 (MANSC1) from Macaca fascicularis (Crab-eating macaque).